The primary structure comprises 887 residues: ATP-dependent DNA helicase srs2 (887 aa).

One can recognise a UvrD-like helicase ATP-binding domain in the interval Lys-9–Ala-304. ATP contacts are provided by residues Gly-33–Arg-38 and Arg-302. Residues Lys-305 to Gly-597 enclose the UvrD-like helicase C-terminal domain.

It belongs to the helicase family. UvrD subfamily.

Its subcellular location is the nucleus. It carries out the reaction Couples ATP hydrolysis with the unwinding of duplex DNA by translocating in the 3'-5' direction.. The catalysed reaction is ATP + H2O = ADP + phosphate + H(+). ATP-dependent DNA helicase involved in DNA repair at least for UV-induced lesions. Also aids the recombinational repair of camptothecin-induced collapsed replication forks. This chain is ATP-dependent DNA helicase srs2 (srs2), found in Schizosaccharomyces pombe (strain 972 / ATCC 24843) (Fission yeast).